We begin with the raw amino-acid sequence, 382 residues long: Anhydro-N-acetylmuramic acid kinase (382 aa).

15-22 (GTSLDGVD) is a binding site for ATP.

This sequence belongs to the anhydro-N-acetylmuramic acid kinase family.

The enzyme catalyses 1,6-anhydro-N-acetyl-beta-muramate + ATP + H2O = N-acetyl-D-muramate 6-phosphate + ADP + H(+). Its pathway is amino-sugar metabolism; 1,6-anhydro-N-acetylmuramate degradation. It functions in the pathway cell wall biogenesis; peptidoglycan recycling. Catalyzes the specific phosphorylation of 1,6-anhydro-N-acetylmuramic acid (anhMurNAc) with the simultaneous cleavage of the 1,6-anhydro ring, generating MurNAc-6-P. Is required for the utilization of anhMurNAc either imported from the medium or derived from its own cell wall murein, and thus plays a role in cell wall recycling. The protein is Anhydro-N-acetylmuramic acid kinase of Haemophilus influenzae (strain ATCC 51907 / DSM 11121 / KW20 / Rd).